Consider the following 689-residue polypeptide: Glycine--tRNA ligase beta subunit (689 aa).

Belongs to the class-II aminoacyl-tRNA synthetase family. In terms of assembly, tetramer of two alpha and two beta subunits.

It localises to the cytoplasm. It catalyses the reaction tRNA(Gly) + glycine + ATP = glycyl-tRNA(Gly) + AMP + diphosphate. The sequence is that of Glycine--tRNA ligase beta subunit from Aeromonas hydrophila subsp. hydrophila (strain ATCC 7966 / DSM 30187 / BCRC 13018 / CCUG 14551 / JCM 1027 / KCTC 2358 / NCIMB 9240 / NCTC 8049).